A 382-amino-acid polypeptide reads, in one-letter code: tRNA-queuosine alpha-mannosyltransferase (382 aa).

Belongs to the glycosyltransferase group 1 family. Glycosyltransferase 4 subfamily.

It localises to the cytoplasm. The protein localises to the nucleus. It carries out the reaction queuosine(34) in tRNA(Asp) + GDP-alpha-D-mannose = O-4''-alpha-D-mannosylqueuosine(34) in tRNA(Asp) + GDP + H(+). Its function is as follows. Glycosyltransferase that specifically catalyzes mannosylation of cytoplasmic tRNA(Asp) modified with queuosine at position 34 (queuosine(34)). Mannosylates the cyclopentene moiety of queuosine(34) in tRNA(Asp) to form mannosyl-queuosine(34). Mannosylation of queuosine(34) in tRNA(Asp) is required to slow-down elongation at cognate codons, GAC and GAU, thereby regulating protein translation. This chain is tRNA-queuosine alpha-mannosyltransferase (GTDC1), found in Gallus gallus (Chicken).